Consider the following 579-residue polypeptide: Fatty-acid amide hydrolase 1 (579 aa).

The helical transmembrane segment at 9–29 (ALPGASGVALACCFVAAAVAL) threads the bilayer. At 30–403 (RWSGRRTARG…GDFVDPCLGD (374 aa)) the chain is on the cytoplasmic side. The active-site Charge relay system is K142. Residues M191, S217, and 238-241 (IGGS) each bind substrate. Residue S217 is the Charge relay system of the active site. S241 acts as the Acyl-ester intermediate in catalysis. Residue S241 is modified to Phosphoserine. Residues 404 to 433 (LVSILKLPQWLKGLLAFLVKPLLPRLSAFL) lie within the membrane without spanning it. Residues 434–579 (SNMKSRSAGK…RLMTPEKQSS (146 aa)) lie on the Cytoplasmic side of the membrane.

Belongs to the amidase family. As to quaternary structure, homodimer. Highly expressed in the brain, small intestine, pancreas, skeletal muscle and testis. Also expressed in the kidney, liver, lung, placenta and prostate.

Its subcellular location is the endomembrane system. The protein localises to the cytoplasm. It is found in the cytoskeleton. It carries out the reaction N-(5Z,8Z,11Z,14Z-eicosatetraenoyl)-ethanolamine + H2O = ethanolamine + (5Z,8Z,11Z,14Z)-eicosatetraenoate. The enzyme catalyses (9Z)-octadecenamide + H2O = (9Z)-octadecenoate + NH4(+). The catalysed reaction is 2-(5Z,8Z,11Z,14Z-eicosatetraenoyl)-glycerol + H2O = glycerol + (5Z,8Z,11Z,14Z)-eicosatetraenoate + H(+). It catalyses the reaction N-(9Z-octadecenoyl) ethanolamine + H2O = ethanolamine + (9Z)-octadecenoate. It carries out the reaction N-hexadecanoylethanolamine + H2O = ethanolamine + hexadecanoate. The enzyme catalyses hexadecanamide + H2O = hexadecanoate + NH4(+). The catalysed reaction is tetradecamide + H2O = tetradecanoate + NH4(+). It catalyses the reaction N-(9Z-octadecenoyl)-taurine + H2O = taurine + (9Z)-octadecenoate. It carries out the reaction (9Z,12Z,15Z)-octadecatrienamide + H2O = (9Z,12Z,15Z)-octadecatrienoate + NH4(+). The enzyme catalyses (5Z,8Z,11Z,14Z)-eicosatetraenamide + H2O = (5Z,8Z,11Z,14Z)-eicosatetraenoate + NH4(+). The catalysed reaction is (6Z)-octadecenamide + H2O = (6Z)-octadecenoate + NH4(+). It catalyses the reaction (15Z)-tetracosenamide + H2O = (15Z)-tetracosenoate + NH4(+). It carries out the reaction (8Z,11Z,14Z)-eicosatrienamide + H2O = (8Z,11Z,14Z)-eicosatrienoate + NH4(+). The enzyme catalyses (11Z,14Z,17Z)-eicosatrienamide + H2O = (11Z,14Z,17Z)-eicosatrienoate + NH4(+). The catalysed reaction is (11Z,14Z)-eicosadienamide + H2O = (11Z,14Z)-eicosadienoate + NH4(+). It catalyses the reaction (9Z,12Z)-octadecadienamide + H2O = (9Z,12Z)-octadecadienoate + NH4(+). It carries out the reaction 1-O-methyl-(5Z,8Z,11Z,14Z)-eicosatetraenoate + H2O = methanol + (5Z,8Z,11Z,14Z)-eicosatetraenoate + H(+). The enzyme catalyses (11Z)-eicosenamide + H2O = (11Z)-eicosenoate + NH4(+). The catalysed reaction is N-(9Z-hexadecenoyl) ethanolamine + H2O = (9Z)-hexadecenoate + ethanolamine. It catalyses the reaction N-octadecanoyl ethanolamine + H2O = octadecanoate + ethanolamine. It carries out the reaction N-docosanoyl-ethanolamine + H2O = docosanoate + ethanolamine. The enzyme catalyses N-tetracosanoyl-taurine + H2O = tetracosanoate + taurine. The catalysed reaction is N-(15Z-tetracosenoyl)-ethanolamine + H2O = (15Z)-tetracosenoate + ethanolamine. It catalyses the reaction N-docosanoyl-taurine + H2O = docosanoate + taurine. It carries out the reaction N-(15Z-tetracosenoyl)-taurine + H2O = (15Z)-tetracosenoate + taurine. The enzyme catalyses N-tricosanoyl-taurine + H2O = tricosanoate + taurine. The catalysed reaction is (9Z)-octadecenoate + glycine = N-(9Z-octadecenoyl)glycine + H2O. It catalyses the reaction N-(5Z,8Z,11Z,14Z)-eicosatetraenoyl-glycine + H2O = (5Z,8Z,11Z,14Z)-eicosatetraenoate + glycine. It carries out the reaction N-(5Z,8Z,11Z,14Z-eicosatetraenoyl)-L-serine + H2O = (5Z,8Z,11Z,14Z)-eicosatetraenoate + L-serine. Inhibited by O-aryl carbamates and alpha-keto heterocycles. Inhibited by trifluoromethyl ketone. Functionally, catalyzes the hydrolysis of endogenous amidated lipids like the sleep-inducing lipid oleamide ((9Z)-octadecenamide), the endocannabinoid anandamide (N-(5Z,8Z,11Z,14Z-eicosatetraenoyl)-ethanolamine), as well as other fatty amides, to their corresponding fatty acids, thereby regulating the signaling functions of these molecules. Hydrolyzes polyunsaturated substrate anandamide preferentially as compared to monounsaturated substrates. It can also catalyze the hydrolysis of the endocannabinoid 2-arachidonoylglycerol (2-(5Z,8Z,11Z,14Z-eicosatetraenoyl)-glycerol). FAAH cooperates with PM20D1 in the hydrolysis of amino acid-conjugated fatty acids such as N-fatty acyl glycine and N-fatty acyl-L-serine, thereby acting as a physiological regulator of specific subsets of intracellular, but not of extracellular, N-fatty acyl amino acids. The polypeptide is Fatty-acid amide hydrolase 1 (FAAH) (Homo sapiens (Human)).